The chain runs to 562 residues: Arginine--tRNA ligase (562 aa).

The 'HIGH' region signature appears at 129 to 139 (ANPTGPLHVGH).

Belongs to the class-I aminoacyl-tRNA synthetase family. Monomer.

The protein resides in the cytoplasm. It carries out the reaction tRNA(Arg) + L-arginine + ATP = L-arginyl-tRNA(Arg) + AMP + diphosphate. The protein is Arginine--tRNA ligase of Xylella fastidiosa (strain M12).